Consider the following 464-residue polypeptide: UDP-glucose:undecaprenyl-phosphate glucose-1-phosphate transferase (464 aa).

Residues 1–15 lie on the Cytoplasmic side of the membrane; it reads MTNLKKRERAKTNAS. A helical transmembrane segment spans residues 16–36; that stretch reads LISMVQRFSDITIMFAGLWLV. Topologically, residues 37 to 38 are periplasmic; the sequence is CE. A helical transmembrane segment spans residues 39–59; sequence VSGLSFLYMHLLVALITLVVF. The Cytoplasmic segment spans residues 60 to 80; it reads QMLGGITDFYRSWRGVRAATE. Residues 81 to 101 form a helical membrane-spanning segment; the sequence is FALLLQNWTLSVIFSAGLVAF. Topologically, residues 102 to 104 are periplasmic; the sequence is NND. The chain crosses the membrane as a helical span at residues 105-125; the sequence is FDTQLKIWLAWYALTSIGLVV. Residues 126 to 278 lie on the Cytoplasmic side of the membrane; it reads CRSCIRIGAG…VNRLLKRAED (153 aa). Residues 279 to 299 form a helical membrane-spanning segment; it reads IVLATLILLLISPVLCCIALA. The Periplasmic segment spans residues 300 to 464; it reads VKLSSPGPVI…FKGFVNKAAY (165 aa).

Belongs to the bacterial sugar transferase family.

Its subcellular location is the cell inner membrane. It carries out the reaction di-trans,octa-cis-undecaprenyl phosphate + UDP-alpha-D-glucose = alpha-D-glucosyl di-trans,octa-cis-undecaprenyl diphosphate + UMP. The protein operates within exopolysaccharide biosynthesis; colanic acid biosynthesis. In terms of biological role, is the initiating enzyme for colanic acid (CA) synthesis. Catalyzes the transfer of the glucose-1-phosphate moiety from UDP-Glc onto the carrier lipid undecaprenyl phosphate (C55-P), forming a phosphoanhydride bond yielding to glucosyl-pyrophosphoryl-undecaprenol (Glc-PP-C55). Also possesses a weak galactose-1-P transferase activity. In Escherichia coli (strain K12), this protein is UDP-glucose:undecaprenyl-phosphate glucose-1-phosphate transferase (wcaJ).